The sequence spans 600 residues: ATP-dependent lipid A-core flippase (600 aa).

6 consecutive transmembrane segments (helical) span residues 28 to 48, 80 to 100, 159 to 179, 182 to 202, 267 to 287, and 295 to 315; these read TLSI…IAFI, VMLM…VANF, ALIS…LMFF, WKLS…ISIV, VSQP…LYAA, and ELTA…LQPI. Positions 29–327 constitute an ABC transmembrane type-1 domain; sequence LSILGLIVYG…LTRVNAEFQR (299 aa). Residues 359–596 enclose the ABC transporter domain; the sequence is LRFDNVSFSY…KGAYAGLYQM (238 aa). 393–400 contributes to the ATP binding site; sequence GRSGSGKS.

The protein belongs to the ABC transporter superfamily. Lipid exporter (TC 3.A.1.106) family. In terms of assembly, homodimer.

It localises to the cell inner membrane. The catalysed reaction is ATP + H2O + lipid A-core oligosaccharideSide 1 = ADP + phosphate + lipid A-core oligosaccharideSide 2.. Involved in lipopolysaccharide (LPS) biosynthesis. Translocates lipid A-core from the inner to the outer leaflet of the inner membrane. Transmembrane domains (TMD) form a pore in the inner membrane and the ATP-binding domain (NBD) is responsible for energy generation. In Shewanella denitrificans (strain OS217 / ATCC BAA-1090 / DSM 15013), this protein is ATP-dependent lipid A-core flippase.